A 519-amino-acid polypeptide reads, in one-letter code: Histidine--tRNA ligase, cytoplasmic (519 aa).

Residues 135–137, Arg-162, Gln-178, Asp-182, Arg-331, and 335–336 each bind L-histidine; these read DLT and YY.

Belongs to the class-II aminoacyl-tRNA synthetase family. Homodimer.

It is found in the cytoplasm. The catalysed reaction is tRNA(His) + L-histidine + ATP = L-histidyl-tRNA(His) + AMP + diphosphate + H(+). Its function is as follows. Catalyzes the ATP-dependent ligation of histidine to the 3'-end of its cognate tRNA, via the formation of an aminoacyl-adenylate intermediate (His-AMP). Plays a role in axon guidance. This Takifugu rubripes (Japanese pufferfish) protein is Histidine--tRNA ligase, cytoplasmic (hars1).